A 910-amino-acid polypeptide reads, in one-letter code: Protein translocase subunit SecA (910 aa).

Residues Gln-87, 105–109 (GEGKT), and Asp-508 each bind ATP. The disordered stretch occupies residues 848-910 (RLSQSQFQHQ…KYKHCHGQLS (63 aa)). Residues 869-880 (AQVQAAQQGVAQ) show a composition bias toward low complexity. Zn(2+) is bound by residues Cys-894, Cys-896, Cys-905, and His-906. Residues 900–910 (KKYKHCHGQLS) show a composition bias toward basic residues.

It belongs to the SecA family. In terms of assembly, monomer and homodimer. Part of the essential Sec protein translocation apparatus which comprises SecA, SecYEG and auxiliary proteins SecDF-YajC and YidC. It depends on Zn(2+) as a cofactor.

Its subcellular location is the cell inner membrane. It is found in the cytoplasm. The catalysed reaction is ATP + H2O + cellular proteinSide 1 = ADP + phosphate + cellular proteinSide 2.. Functionally, part of the Sec protein translocase complex. Interacts with the SecYEG preprotein conducting channel. Has a central role in coupling the hydrolysis of ATP to the transfer of proteins into and across the cell membrane, serving both as a receptor for the preprotein-SecB complex and as an ATP-driven molecular motor driving the stepwise translocation of polypeptide chains across the membrane. This chain is Protein translocase subunit SecA, found in Stenotrophomonas maltophilia (strain K279a).